Reading from the N-terminus, the 92-residue chain is Probable Fe(2+)-trafficking protein (92 aa).

It belongs to the Fe(2+)-trafficking protein family.

Its function is as follows. Could be a mediator in iron transactions between iron acquisition and iron-requiring processes, such as synthesis and/or repair of Fe-S clusters in biosynthetic enzymes. The polypeptide is Probable Fe(2+)-trafficking protein (Anaeromyxobacter sp. (strain Fw109-5)).